Reading from the N-terminus, the 189-residue chain is Phosphomevalonate kinase (189 aa).

Residues 10 to 16 and R138 each bind ATP; that span reads KRKCGKD. N168 lines the substrate pocket.

Its subcellular location is the cytoplasm. The protein localises to the cytosol. It catalyses the reaction (R)-5-phosphomevalonate + ATP = (R)-5-diphosphomevalonate + ADP. It functions in the pathway isoprenoid biosynthesis; isopentenyl diphosphate biosynthesis via mevalonate pathway; isopentenyl diphosphate from (R)-mevalonate: step 2/3. The polypeptide is Phosphomevalonate kinase (Drosophila melanogaster (Fruit fly)).